The chain runs to 70 residues: U-scutigerotoxin(02)-Tl1a (70 aa).

An N-terminal signal peptide occupies residues 1–17 (MKYILLGLLLMVVLANA).

It belongs to the scutigerotoxin-02 family. Post-translationally, contains 4 disulfide bonds. In terms of tissue distribution, expressed by the venom gland.

Its subcellular location is the secreted. The sequence is that of U-scutigerotoxin(02)-Tl1a from Thereuopoda longicornis (Long-legged centipede).